The sequence spans 338 residues: Pseudouridylate synthase TRUB1 (338 aa).

N-acetylalanine is present on Ala2. Asp109 functions as the Nucleophile in the catalytic mechanism.

It belongs to the pseudouridine synthase TruB family.

It localises to the nucleus. The protein resides in the cytoplasm. The protein localises to the cytosol. The enzyme catalyses a uridine in mRNA = a pseudouridine in mRNA. It carries out the reaction a uridine in tRNA = a pseudouridine in tRNA. The catalysed reaction is uridine(55) in tRNA = pseudouridine(55) in tRNA. Pseudouridine synthase that catalyzes pseudouridylation of mRNAs and tRNAs. Mediates pseudouridylation of mRNAs with the consensus sequence 5'-GUUCNANNC-3', harboring a stem-loop structure. Constitutes the major pseudouridine synthase acting on mRNAs. Also catalyzes pseudouridylation of some tRNAs, including synthesis of pseudouridine(55) from uracil-55, in the psi GC loop of a subset of tRNAs. Promotes the processing of pri-let-7 microRNAs (pri-miRNAs) independently of its RNA pseudouridylate synthase activity. Acts by binding to the stem-loop structure on pri-let-7, preventing LIN28-binding (LIN28A and/or LIN28B), thereby enhancing the interaction between pri-let-7 and the microprocessor DGCR8, which mediates miRNA maturation. This is Pseudouridylate synthase TRUB1 from Mus musculus (Mouse).